Reading from the N-terminus, the 238-residue chain is Ephrin-A3 (238 aa).

A signal peptide spans 1-22 (MAAAPLLLLLLLVPVPLLPLLA). The region spanning 30 to 169 (GNRHAVYWNS…RMKVFVCCAS (140 aa)) is the Ephrin RBD domain. 3 N-linked (GlcNAc...) asparagine glycosylation sites follow: N38, N67, and N100. 2 disulfides stabilise this stretch: C63/C110 and C99/C158. Residue G214 is the site of GPI-anchor amidated glycine attachment. Residues 215–238 (TSPKREHLPLAVGIAFFLMTFLAS) constitute a propeptide, removed in mature form.

The protein belongs to the ephrin family. Interacts with EPHA8; activates EPHA8. As to expression, expressed in brain, skeletal muscle, spleen, thymus, prostate, testis, ovary, small intestine, and peripheral blood leukocytes.

The protein localises to the cell membrane. Functionally, cell surface GPI-bound ligand for Eph receptors, a family of receptor tyrosine kinases which are crucial for migration, repulsion and adhesion during neuronal, vascular and epithelial development. Binds promiscuously Eph receptors residing on adjacent cells, leading to contact-dependent bidirectional signaling into neighboring cells. The signaling pathway downstream of the receptor is referred to as forward signaling while the signaling pathway downstream of the ephrin ligand is referred to as reverse signaling. The polypeptide is Ephrin-A3 (EFNA3) (Homo sapiens (Human)).